A 441-amino-acid chain; its full sequence is Gluconate 2-dehydrogenase cytochrome c subunit (441 aa).

The signal sequence occupies residues 1–19; the sequence is MMKSILALVLGTLSFAALA. Cytochrome c domains lie at 26-129, 173-289, and 312-403; these read ALVK…MHGV, PVLA…KSLG, and DDSQ…RGSW. The heme c site is built by Cys-40, Cys-43, His-44, Cys-188, Cys-191, His-192, Cys-325, Cys-328, and His-329.

Heterotrimer. FAD is required as a cofactor. In terms of processing, binds 3 heme c groupd covalently per subunit.

The protein resides in the cell membrane. It carries out the reaction D-gluconate + A = 2-dehydro-D-gluconate + AH2. In terms of biological role, part of the heterotrimer that catalyzes the conversion of D-gluconate to 2-dehydro-D-gluconate. In Pantoea cypripedii (Pectobacterium cypripedii), this protein is Gluconate 2-dehydrogenase cytochrome c subunit.